The primary structure comprises 122 residues: Fluoride-specific ion channel FluC 2 (122 aa).

4 consecutive transmembrane segments (helical) span residues 1 to 21 (MAWL…FLLS), 33 to 53 (PLGT…LLAL), 62 to 82 (VTLA…TFTY), and 102 to 122 (GSIL…GSLF). Residues Gly72 and Thr75 each contribute to the Na(+) site.

The protein belongs to the fluoride channel Fluc/FEX (TC 1.A.43) family.

It is found in the cell membrane. It catalyses the reaction fluoride(in) = fluoride(out). Its activity is regulated as follows. Na(+) is not transported, but it plays an essential structural role and its presence is essential for fluoride channel function. Functionally, fluoride-specific ion channel. Important for reducing fluoride concentration in the cell, thus reducing its toxicity. The chain is Fluoride-specific ion channel FluC 2 from Moorella thermoacetica (strain ATCC 39073 / JCM 9320).